We begin with the raw amino-acid sequence, 95 residues long: Protein TusB (95 aa).

This sequence belongs to the DsrH/TusB family. In terms of assembly, heterohexamer, formed by a dimer of trimers. The hexameric TusBCD complex contains 2 copies each of TusB, TusC and TusD. The TusBCD complex interacts with TusE.

The protein localises to the cytoplasm. Part of a sulfur-relay system required for 2-thiolation of 5-methylaminomethyl-2-thiouridine (mnm(5)s(2)U) at tRNA wobble positions. This is Protein TusB from Pectobacterium atrosepticum (strain SCRI 1043 / ATCC BAA-672) (Erwinia carotovora subsp. atroseptica).